A 326-amino-acid polypeptide reads, in one-letter code: ELMO domain-containing protein 1 (326 aa).

One can recognise an ELMO domain in the interval 133 to 306; the sequence is QHEEMLLKLW…KFRKRIIKQL (174 aa).

Acts as a GTPase-activating protein (GAP) toward guanine nucleotide exchange factors like ARL2, ARL3, ARF1 and ARF6, but not for GTPases outside the Arf family. This chain is ELMO domain-containing protein 1 (ELMOD1), found in Bos taurus (Bovine).